We begin with the raw amino-acid sequence, 251 residues long: Protein FAM216A (251 aa).

The disordered stretch occupies residues 1 to 41; that stretch reads MPSRWPGVAGPPALARTEGGEGSAGHSYPQNSKGTGEQHKA.

Belongs to the FAM216 family.

In Mus musculus (Mouse), this protein is Protein FAM216A (Fam216a).